We begin with the raw amino-acid sequence, 353 residues long: uncharacterized protein (353 aa).

The N-terminal stretch at 1–24 is a signal peptide; the sequence is MRVVKRIAVACYLGITIFSGIAFG.

The protein belongs to the chlamydial CPn_1058/CT_355/TC_0634 family.

This is an uncharacterized protein from Chlamydia muridarum (strain MoPn / Nigg).